Reading from the N-terminus, the 95-residue chain is Small integral membrane protein 26 (95 aa).

A helical membrane pass occupies residues 13–35; the sequence is MSVVYGIGTWSVLGSLLYYSRTM.

This sequence belongs to the SMIM26 family. Interacts with AGK and SLC25A11. In terms of tissue distribution, detected in kidney (at protein level).

The protein localises to the mitochondrion outer membrane. Functionally, may play a role in cell viability. This is Small integral membrane protein 26 from Homo sapiens (Human).